A 265-amino-acid polypeptide reads, in one-letter code: UPF0026 protein slr1464 (265 aa).

The Radical SAM core domain occupies 16–252 (RYGRSLGIDP…QNLAKKISGA (237 aa)). [4Fe-4S] cluster is bound by residues Cys-32, Cys-36, and Cys-39. Residues 204 to 230 (RPTRPKPLQRELEGRGNHTGTPYGDRP) are disordered.

The protein belongs to the UPF0026 family. The cofactor is [4Fe-4S] cluster.

This is UPF0026 protein slr1464 from Synechocystis sp. (strain ATCC 27184 / PCC 6803 / Kazusa).